The primary structure comprises 173 residues: NADH-ubiquinone oxidoreductase chain 6 (173 aa).

6 consecutive transmembrane segments (helical) span residues 1–21, 27–47, 48–68, 85–105, 106–126, and 139–159; these read MTYF…AVAS, YGVV…LSLG, VSFV…VVFV, WGVV…LIVG, GSIG…MFSV, and CGVG…FVVL.

The protein belongs to the complex I subunit 6 family.

The protein resides in the mitochondrion membrane. It catalyses the reaction a ubiquinone + NADH + 5 H(+)(in) = a ubiquinol + NAD(+) + 4 H(+)(out). Its function is as follows. Core subunit of the mitochondrial membrane respiratory chain NADH dehydrogenase (Complex I) that is believed to belong to the minimal assembly required for catalysis. Complex I functions in the transfer of electrons from NADH to the respiratory chain. The immediate electron acceptor for the enzyme is believed to be ubiquinone. In Aethia psittacula (Parakeet auklet), this protein is NADH-ubiquinone oxidoreductase chain 6 (MT-ND6).